A 987-amino-acid chain; its full sequence is SNF2 domain-containing protein ENL1 (987 aa).

Disordered regions lie at residues 1–172 and 224–245; these read MASP…AYGG and FGDY…ENHA. 2 stretches are compositionally biased toward pro residues: residues 18–27 and 51–71; these read TPPAPTPLAA and NPNP…PQEP. Basic and acidic residues predominate over residues 99–110; it reads DSIRDILDDLTT. Over residues 141-156 the composition is skewed to polar residues; sequence PSQSQLNDGTKPSSSF. Over residues 226–237 the composition is skewed to acidic residues; sequence DYDDEDDIDQDA. The region spanning 292–466 is the Helicase ATP-binding domain; the sequence is WVLHCRGTGG…WALFYFCCPE (175 aa). 305 to 312 contributes to the ATP binding site; the sequence is DDMGLGKT. Positions 417–420 match the DEAH box motif; sequence DEGH. Residues 645 to 801 enclose the Helicase C-terminal domain; that stretch reads SLLQNLVSEG…TRYFSKRDIQ (157 aa).

Belongs to the SNF2/RAD54 helicase family. Expressed in ovaries, roots, shoots and leaves.

The protein resides in the cytoplasm. It localises to the chromosome. Its function is as follows. DNA helicase that acts as an essential component of the spindle assembly checkpoint. Plays an indispensable role in the development of seed endosperm. Is required to secure sister chromosome separation during endosperm syncytial mitosis, which involves extremely rapid free nuclear cycles. This chain is SNF2 domain-containing protein ENL1, found in Oryza sativa subsp. japonica (Rice).